The following is a 715-amino-acid chain: Fatty acid oxidation complex subunit alpha (715 aa).

The enoyl-CoA hydratase/isomerase stretch occupies residues 1–190 (MIYQGKAITV…KVGAVDAVVA (190 aa)). Position 297 (Asp297) interacts with substrate. The 3-hydroxyacyl-CoA dehydrogenase stretch occupies residues 312 to 715 (KDVKLAAVLG…MAKNGQKFFG (404 aa)). NAD(+) is bound by residues Met325, Asp344, 401-403 (VVE), Lys408, and Ser430. His451 serves as the catalytic For 3-hydroxyacyl-CoA dehydrogenase activity. Residue Asn454 participates in NAD(+) binding. Substrate-binding residues include Asn501 and Tyr660.

It in the N-terminal section; belongs to the enoyl-CoA hydratase/isomerase family. In the C-terminal section; belongs to the 3-hydroxyacyl-CoA dehydrogenase family. In terms of assembly, heterotetramer of two alpha chains (FadB) and two beta chains (FadA).

It carries out the reaction a (3S)-3-hydroxyacyl-CoA + NAD(+) = a 3-oxoacyl-CoA + NADH + H(+). The enzyme catalyses a (3S)-3-hydroxyacyl-CoA = a (2E)-enoyl-CoA + H2O. It catalyses the reaction a 4-saturated-(3S)-3-hydroxyacyl-CoA = a (3E)-enoyl-CoA + H2O. The catalysed reaction is (3S)-3-hydroxybutanoyl-CoA = (3R)-3-hydroxybutanoyl-CoA. It carries out the reaction a (3Z)-enoyl-CoA = a 4-saturated (2E)-enoyl-CoA. The enzyme catalyses a (3E)-enoyl-CoA = a 4-saturated (2E)-enoyl-CoA. It functions in the pathway lipid metabolism; fatty acid beta-oxidation. Functionally, involved in the aerobic and anaerobic degradation of long-chain fatty acids via beta-oxidation cycle. Catalyzes the formation of 3-oxoacyl-CoA from enoyl-CoA via L-3-hydroxyacyl-CoA. It can also use D-3-hydroxyacyl-CoA and cis-3-enoyl-CoA as substrate. This is Fatty acid oxidation complex subunit alpha from Pseudomonas aeruginosa (strain LESB58).